The sequence spans 639 residues: Chaperone protein HtpG (639 aa).

Residues 1-348 (MAQYEFQTEV…SEDLPLNVSR (348 aa)) form an a; substrate-binding region. Residues 349–565 (EILQQNRVLA…ENDPTVQMER (217 aa)) form a b region. Positions 566–639 (LMRATGQTHK…KRVNRLLARG (74 aa)) are c.

Belongs to the heat shock protein 90 family. In terms of assembly, homodimer.

The protein resides in the cytoplasm. In terms of biological role, molecular chaperone. Has ATPase activity. This is Chaperone protein HtpG from Treponema pallidum (strain Nichols).